The following is a 360-amino-acid chain: Ribosomal RNA large subunit methyltransferase M (360 aa).

S-adenosyl-L-methionine-binding positions include S192, A225–G228, D244, D264, and D280. K309 functions as the Proton acceptor in the catalytic mechanism.

Belongs to the class I-like SAM-binding methyltransferase superfamily. RNA methyltransferase RlmE family. RlmM subfamily. In terms of assembly, monomer.

Its subcellular location is the cytoplasm. The enzyme catalyses cytidine(2498) in 23S rRNA + S-adenosyl-L-methionine = 2'-O-methylcytidine(2498) in 23S rRNA + S-adenosyl-L-homocysteine + H(+). Functionally, catalyzes the 2'-O-methylation at nucleotide C2498 in 23S rRNA. The polypeptide is Ribosomal RNA large subunit methyltransferase M (Alkalilimnicola ehrlichii (strain ATCC BAA-1101 / DSM 17681 / MLHE-1)).